A 274-amino-acid polypeptide reads, in one-letter code: Ribosome biogenesis protein UTP30 (274 aa).

It belongs to the universal ribosomal protein uL1 family. Highly divergent. Component of the 90S pre-ribosomes. Interacts with FAF1.

Its subcellular location is the nucleus. The protein localises to the nucleolus. Involved in rRNA-processing and ribosome biosynthesis. This Saccharomyces cerevisiae (strain ATCC 204508 / S288c) (Baker's yeast) protein is Ribosome biogenesis protein UTP30 (UTP30).